The chain runs to 351 residues: Ca(2+)/H(+) antiporter ChaA (351 aa).

11 consecutive transmembrane segments (helical) span residues 4–24 (IFFILVAAGVPLSVIGSLMHW), 25–45 (PSAVLFAVYCVTIIALASYMG), 59–79 (IGGLLNATFGNAVELIISLFA), 86–106 (GIVLASLTGSVLGNLLLVAGL), 130–150 (GLLIFAIIVAFVIPEVFSVGM), 156–176 (LNLSIGISIIMILLYVAALYF), 205–225 (VATIVLFAATIVVAYISENLV), 241–261 (FIGVIIVAIVGNAAEHASAII), 282–302 (IAMFVAPVLVICSIFFPTSMP), 303–323 (LVFTLPELVAMVSAVLLMIAI), and 331–351 (WFEGATLLAAYVIMAIGFFLL).

The protein belongs to the Ca(2+):cation antiporter (CaCA) (TC 2.A.19) family. Cation/proton exchanger (CAX) subfamily. In terms of assembly, homotrimer.

It is found in the cell membrane. Its activity is regulated as follows. Calcium efflux is tightly regulated by intracellular pH. Ca(+)/H(+) antiporter that extrudes calcium in exchange for external protons. Does not transport sodium or potassium. This chain is Ca(2+)/H(+) antiporter ChaA (chaA), found in Bacillus subtilis (strain 168).